A 420-amino-acid polypeptide reads, in one-letter code: Bile acid-CoA:amino acid N-acyltransferase (420 aa).

An N6-succinyllysine modification is found at Lys-40. A Phosphoserine modification is found at Ser-125. Active-site charge relay system residues include Cys-235 and Asp-328. 2 positions are modified to N6-succinyllysine: Lys-346 and Lys-350. Residue His-362 is the Charge relay system of the active site. Lys-409 carries the post-translational modification N6-succinyllysine. A Phosphoserine modification is found at Ser-418.

This sequence belongs to the C/M/P thioester hydrolase family. Monomer. In terms of tissue distribution, highly expressed in liver, kidney, gallbladder, proximal intestine and distal intestine. Weakly expressed in adrenal gland, lung, brain and muscle.

It localises to the cytoplasm. The protein resides in the cytosol. It is found in the peroxisome. The catalysed reaction is choloyl-CoA + glycine = glycocholate + CoA + H(+). It carries out the reaction hexadecanoyl-CoA + H2O = hexadecanoate + CoA + H(+). It catalyses the reaction choloyl-CoA + H2O = cholate + CoA + H(+). The enzyme catalyses chenodeoxycholoyl-CoA + H2O = chenodeoxycholate + CoA + H(+). The catalysed reaction is eicosanoyl-CoA + H2O = eicosanoate + CoA + H(+). It carries out the reaction octadecanoyl-CoA + H2O = octadecanoate + CoA + H(+). It catalyses the reaction docosanoyl-CoA + H2O = docosanoate + CoA + H(+). The enzyme catalyses tetracosanoyl-CoA + H2O = tetracosanoate + CoA + H(+). The catalysed reaction is hexacosanoyl-CoA + H2O = hexacosanoate + CoA + H(+). It carries out the reaction dodecanoyl-CoA + H2O = dodecanoate + CoA + H(+). It catalyses the reaction tetradecanoyl-CoA + H2O = tetradecanoate + CoA + H(+). The enzyme catalyses choloyl-CoA + taurine = taurocholate + CoA + H(+). The catalysed reaction is chenodeoxycholoyl-CoA + glycine = glycochenodeoxycholate + CoA + H(+). It carries out the reaction chenodeoxycholoyl-CoA + taurine = taurochenodeoxycholate + CoA + H(+). It catalyses the reaction eicosanoyl-CoA + glycine = N-eicosanoylglycinate + CoA + H(+). The enzyme catalyses hexacosanoyl-CoA + glycine = N-hexacosanoylglycine + CoA + H(+). The catalysed reaction is docosanoyl-CoA + glycine = N-docosanoylglycine + CoA + H(+). Catalyzes the amidation of bile acids (BAs) with the amino acid taurine. Selective for taurine conjugation of cholyl CoA and only taurine-conjugated BAs are found in bile. Amidation of BAs in the liver with taurine prior to their excretion into bile is an important biochemical event in bile acid metabolism. This conjugation (or amidation) plays several important biological roles in that it promotes the secretion of BAs and cholesterol into bile and increases the detergent properties of BAs in the intestine, which facilitates lipid and vitamin absorption. May also act as an acyl-CoA thioesterase that regulates intracellular levels of free fatty acids. In vitro, catalyzes the hydrolysis of long- and very long-chain saturated acyl-CoAs to the free fatty acid and coenzyme A (CoASH), and conjugates glycine to these acyl-CoAs. The chain is Bile acid-CoA:amino acid N-acyltransferase (Baat) from Mus musculus (Mouse).